A 505-amino-acid polypeptide reads, in one-letter code: Protein nucleotidyltransferase YdiU (505 aa).

ATP is bound by residues Gly102, Gly104, Arg105, Lys125, Asp137, Gly138, Arg188, and Arg195. Residue Asp264 is the Proton acceptor of the active site. Positions 265 and 274 each coordinate Mg(2+). Asp274 provides a ligand contact to ATP.

It belongs to the SELO family. Mg(2+) is required as a cofactor. The cofactor is Mn(2+).

The enzyme catalyses L-seryl-[protein] + ATP = 3-O-(5'-adenylyl)-L-seryl-[protein] + diphosphate. It catalyses the reaction L-threonyl-[protein] + ATP = 3-O-(5'-adenylyl)-L-threonyl-[protein] + diphosphate. The catalysed reaction is L-tyrosyl-[protein] + ATP = O-(5'-adenylyl)-L-tyrosyl-[protein] + diphosphate. It carries out the reaction L-histidyl-[protein] + UTP = N(tele)-(5'-uridylyl)-L-histidyl-[protein] + diphosphate. The enzyme catalyses L-seryl-[protein] + UTP = O-(5'-uridylyl)-L-seryl-[protein] + diphosphate. It catalyses the reaction L-tyrosyl-[protein] + UTP = O-(5'-uridylyl)-L-tyrosyl-[protein] + diphosphate. Its function is as follows. Nucleotidyltransferase involved in the post-translational modification of proteins. It can catalyze the addition of adenosine monophosphate (AMP) or uridine monophosphate (UMP) to a protein, resulting in modifications known as AMPylation and UMPylation. The polypeptide is Protein nucleotidyltransferase YdiU (Nitrobacter winogradskyi (strain ATCC 25391 / DSM 10237 / CIP 104748 / NCIMB 11846 / Nb-255)).